The chain runs to 226 residues: Ribosomal RNA small subunit methyltransferase G (226 aa).

Residues G83, F88, I136–E137, and R152 each bind S-adenosyl-L-methionine. Positions F199–R226 are disordered.

This sequence belongs to the methyltransferase superfamily. RNA methyltransferase RsmG family.

Its subcellular location is the cytoplasm. It carries out the reaction guanosine(527) in 16S rRNA + S-adenosyl-L-methionine = N(7)-methylguanosine(527) in 16S rRNA + S-adenosyl-L-homocysteine. Its function is as follows. Specifically methylates the N7 position of guanine in position 527 of 16S rRNA. The sequence is that of Ribosomal RNA small subunit methyltransferase G from Parvibaculum lavamentivorans (strain DS-1 / DSM 13023 / NCIMB 13966).